Here is a 424-residue protein sequence, read N- to C-terminus: Adenylosuccinate synthetase (424 aa).

Residues 12 to 18 (GDEGKGK) and 40 to 42 (GHT) each bind GTP. The active-site Proton acceptor is D13. Positions 13 and 40 each coordinate Mg(2+). IMP contacts are provided by residues 13-16 (DEGK), 38-41 (NAGH), T130, R144, N220, T235, and R299. Catalysis depends on H41, which acts as the Proton donor. Residue 295 to 301 (VTTGRKR) coordinates substrate. GTP contacts are provided by residues R301, 327 to 329 (KLD), and 412 to 414 (GTG).

It belongs to the adenylosuccinate synthetase family. As to quaternary structure, homodimer. It depends on Mg(2+) as a cofactor.

It is found in the cytoplasm. It catalyses the reaction IMP + L-aspartate + GTP = N(6)-(1,2-dicarboxyethyl)-AMP + GDP + phosphate + 2 H(+). Its pathway is purine metabolism; AMP biosynthesis via de novo pathway; AMP from IMP: step 1/2. Its function is as follows. Plays an important role in the de novo pathway and in the salvage pathway of purine nucleotide biosynthesis. Catalyzes the first committed step in the biosynthesis of AMP from IMP. The chain is Adenylosuccinate synthetase (adB) from Emericella nidulans (strain FGSC A4 / ATCC 38163 / CBS 112.46 / NRRL 194 / M139) (Aspergillus nidulans).